The chain runs to 620 residues: MSSGVQGGPAANANAYQTHPLRDAASALGTLSPQAYVDVVSAAQRNFLERMSQLASEQCDAQPAAHDARLDDRPALRAPQERDAPPLGASDTGSRASGAAKLTELLGVLMSVISASSLDELKQRSDIWNQMSKAAQDNLSRLSDAFQRATDEAKAAADAAEQAAAAAKQAGADAKAADAAVDAAQKRYDDAVKQGLPDDRLQSLKAALEQARQQAGDAHGRADALQADATKKLDAASALATQARACEQQVDDAVNQATQQYGASASLRTPQSPRLSGAAELTAVLGKLQELISSGNVKELESKQKLFTEMQAKREAELQKKSDEYQAQVKKAEEMQKTMGCIGKIVGWVITAVSFAAAAFTGGASLALAAVGLALAVGDEISRATTGVSFMDKLMQPVMDAILKPLMEMISSLITKALVACGVDQQKAELAGAILGAVVTGVALVAAAFVGASAVKAVASKVIDAMAGQLTKLMDSAIGKMLVQLIEKFSEKSGLQALGSRTATAMTRMRRAIGVEAKEDGMLLANRFEKAGTVMNVGNQVSQAAGGIVVGVERAKAMGLLADVKEAMYDIKLLGDLLKQAVDAFAEHNRVLAQLMQQMSDAGEMQTSTGKLILRNARAV.

Residues 58–95 (QCDAQPAAHDARLDDRPALRAPQERDAPPLGASDTGSR) are disordered. The span at 66 to 84 (HDARLDDRPALRAPQERDA) shows a compositional bias: basic and acidic residues. The stretch at 309 to 339 (EMQAKREAELQKKSDEYQAQVKKAEEMQKTM) forms a coiled coil. The next 3 helical transmembrane spans lie at 355-375 (FAAA…GLAL), 401-421 (AILK…LVAC), and 430-450 (LAGA…AAFV).

The protein belongs to the SctE/SipB/YopB family.

The protein resides in the secreted. It is found in the host membrane. Its function is as follows. Plays a role in the bacterium-induced formation of multinucleated giant cell (MNGC), which is formed after host cell fusion, as well as in the intercellular spreading of bacteria and in the induction of apoptosis in macrophages. May act in concert with other effector proteins to induce fusion of host cell membranes. This is Translocator protein BipB (bipB) from Burkholderia mallei (strain NCTC 10247).